Reading from the N-terminus, the 376-residue chain is Putative aryl-alcohol dehydrogenase AAD14 (376 aa).

The active-site Proton donor is the tyrosine 76. Substrate is bound at residue histidine 151. Residue 236 to 246 (DVMGGGRFQSK) coordinates NADP(+).

It belongs to the aldo/keto reductase family. Aldo/keto reductase 2 subfamily.

This is Putative aryl-alcohol dehydrogenase AAD14 (AAD14) from Saccharomyces cerevisiae (strain ATCC 204508 / S288c) (Baker's yeast).